Consider the following 548-residue polypeptide: MSNKPFIYQAPFPMGKDNTEYYLLTSDYVSVADFDGETILKVEPEALTLLAQQAFHDASFMLRPAHQKQVAAILHDPEASENDKYVALQFLRNSEIAAKGVLPTCQDTGTAIIVGKKGQRVWTGGGDEETLSKGVYNTYIEDNLRYSQNAALDMYKEVNTGTNLPAQIDLYAVDGDEYKFLCVAKGGGSANKTYLYQETKALLTPGKLKNFLVEKMRTLGTAACPPYHIAFVIGGTSAETNLKTVKLASAHYYDELPTEGNEHGQAFRDVQLEQELLEEAQKLGLGAQFGGKYFAHDIRVIRLPRHGASCPVGMGVSCSADRNIKAKINREGIWIEKLEHNPGQYIPQELRQAGEGEAVKVDLNRPMKEILAQLSQYPVSTRLSLTGTIIVGRDIAHAKLKELIDAGKELPQYIKDHPIYYAGPAKTPAGYPSGSLGPTTAGRMDSYVDLLQSHGGSMIMLAKGNRSQQVTDACHKHGGFYLGSIGGPAAVLAQQSIKHLECVAYPELGMEAIWKIEVEDFPAFILVDDKGNDFFQQIVNKQCANCTK.

Cys-105 serves as a coordination point for [4Fe-4S] cluster. Position 192 is an N6-acetyllysine (Lys-192). Positions 224 and 318 each coordinate [4Fe-4S] cluster.

Belongs to the class-I fumarase family. Homodimer. Requires [4Fe-4S] cluster as cofactor.

The catalysed reaction is (S)-malate = fumarate + H2O. It carries out the reaction (S,S)-tartrate = oxaloacetate + H2O. Its function is as follows. Catalyzes the reversible hydration of fumarate to (S)-malate. Functions in the generation of fumarate for use as an anaerobic electron acceptor. To a lesser extent, also displays D-tartrate dehydratase activity, but is not able to convert (R)-malate, L-tartrate or meso-tartrate. Is required for anaerobic growth on D-tartrate. The sequence is that of Fumarate hydratase class I, anaerobic from Escherichia coli (strain K12).